The primary structure comprises 440 residues: GTPase Obg (440 aa).

The 159-residue stretch at 5–163 (STFVDQTKIE…RTLRLELKVL (159 aa)) folds into the Obg domain. Residues 164 to 338 (ADVGLVGFPS…LMSRAADLVS (175 aa)) form the OBG-type G domain. GTP is bound by residues 170-177 (GFPSVGKS), 195-199 (FTTLK), 217-220 (DLPG), 288-291 (SQMD), and 319-321 (SSV). 2 residues coordinate Mg(2+): Ser-177 and Thr-197. One can recognise an OCT domain in the interval 362–440 (YHRPEKMEFT…IGDFSFEFVQ (79 aa)).

It belongs to the TRAFAC class OBG-HflX-like GTPase superfamily. OBG GTPase family. In terms of assembly, monomer. Requires Mg(2+) as cofactor.

Its subcellular location is the cytoplasm. Functionally, an essential GTPase which binds GTP, GDP and possibly (p)ppGpp with moderate affinity, with high nucleotide exchange rates and a fairly low GTP hydrolysis rate. Plays a role in control of the cell cycle, stress response, ribosome biogenesis and in those bacteria that undergo differentiation, in morphogenesis control. In Lactobacillus delbrueckii subsp. bulgaricus (strain ATCC 11842 / DSM 20081 / BCRC 10696 / JCM 1002 / NBRC 13953 / NCIMB 11778 / NCTC 12712 / WDCM 00102 / Lb 14), this protein is GTPase Obg.